Reading from the N-terminus, the 380-residue chain is MPKVPETLAPRRTSRQIRVGKVLVGGDAPVSVQSMTTTPTTNINATLQQIAELTACGCDIVRVAVPNRDDAEVLPIIAKKSQIPVIADIHFQPNYVYAAIDAGCAAVRVNPGNIRKFDDQVGEIARRAKAADVSLRIGVNAGSLDRRLLEKYGKPTAEALVESAVWEASLFEEHDFHDFKISVKHNDPIVMVKAYRMLAERGDWPLHLGVTEAGPAFQGTIKSATAFGILLGEGIGDTIRVSLSAPPAEEVKVGLQILQSLNLRERKLEIVSCPSCGRAQVDVYKLAEDVTSGFEGMSVPLRVAVMGCVVNGPGEAREADLGVASGNGKGQIFVKGEVIKTVPESEIVATLIAEATRIAEDMADAGAPSPSGKPTVTVGR.

Residues Cys-273, Cys-276, Cys-308, and Glu-315 each coordinate [4Fe-4S] cluster.

The protein belongs to the IspG family. It depends on [4Fe-4S] cluster as a cofactor.

The catalysed reaction is (2E)-4-hydroxy-3-methylbut-2-enyl diphosphate + oxidized [flavodoxin] + H2O + 2 H(+) = 2-C-methyl-D-erythritol 2,4-cyclic diphosphate + reduced [flavodoxin]. It functions in the pathway isoprenoid biosynthesis; isopentenyl diphosphate biosynthesis via DXP pathway; isopentenyl diphosphate from 1-deoxy-D-xylulose 5-phosphate: step 5/6. In terms of biological role, converts 2C-methyl-D-erythritol 2,4-cyclodiphosphate (ME-2,4cPP) into 1-hydroxy-2-methyl-2-(E)-butenyl 4-diphosphate. The polypeptide is 4-hydroxy-3-methylbut-2-en-1-yl diphosphate synthase (flavodoxin) (Leifsonia xyli subsp. xyli (strain CTCB07)).